The following is an 85-amino-acid chain: Prosialokinin (85 aa).

Residues 1–23 (MNMFITVQIVIVLVLAVLSEAAS) form the signal peptide. A propeptide spanning residues 24–74 (LPTATERKDAMDEGPNQSDEPEGSVADPSTKDDDYSDSLKQDEKYYKVRLL) is cleaved from the precursor. The disordered stretch occupies residues 26–61 (TATERKDAMDEGPNQSDEPEGSVADPSTKDDDYSDS). The span at 52–61 (STKDDDYSDS) shows a compositional bias: basic and acidic residues. Met-84 is subject to Methionine amide.

Belongs to the tachykinin family. Expressed exclusively in the medial lobe of female salivary gland. Not detected in female carcass without head and salivary glands. Not detected in male tissues.

The protein resides in the secreted. Functionally, vasodilatory peptide. Facilitates mosquito blood feeding on vertebrate host. Induces nitric oxide (NO) release in blood vessels through the activation of the nitric oxide synthase (NOS3). Enhances endothelial permeability and induces edema at the site of inoculation in the host. Induces host smooth muscle contraction. Down-regulates production of Th1 cytokines, such as IL2 and IFN-gamma (IFNG), in mouse splenocytes. Up-regulates production of Th2 cytokines, such as IL4 and IL10, in mouse splenocytes. Promotes recruitment of host leukocytes, especially neutrophils and CD8+ T cells, to the bite site. Modulates cytokine production by host macrophages. Modulates populations of monocytes/macrophages, plasmacytoid dendritic cells, B cells, CD4+ T cells, NK and NKT cells, shifting mammalian immunity towards Th2 responses. (Microbial infection) Promotes Semliki Forest virus infection in the host. Its function is as follows. (Microbial infection) Does not affect Zika virus replication in the host. In Aedes aegypti (Yellowfever mosquito), this protein is Prosialokinin.